Here is a 514-residue protein sequence, read N- to C-terminus: Protein translocase subunit SecD (514 aa).

5 helical membrane passes run 7-27 (WKIF…LPNF), 357-377 (IIGF…LGLF), 389-409 (VLAL…AGII), 448-470 (FATI…IFGV), and 482-502 (IGII…IDIW).

It belongs to the SecD/SecF family. SecD subfamily. As to quaternary structure, forms a complex with SecF. Part of the essential Sec protein translocation apparatus which comprises SecA, SecYEG and auxiliary proteins SecDF-YajC and YidC.

The protein localises to the cell inner membrane. Part of the Sec protein translocase complex. Interacts with the SecYEG preprotein conducting channel. SecDF uses the proton motive force (PMF) to complete protein translocation after the ATP-dependent function of SecA. The protein is Protein translocase subunit SecD of Rickettsia bellii (strain RML369-C).